A 372-amino-acid chain; its full sequence is Ligninase B (372 aa).

Residues 1 to 21 form the signal peptide; that stretch reads MAFKQLFAAISLALSLSAANA. A propeptide spanning residues 22–28 is cleaved from the precursor; that stretch reads AAVIEKR. Cystine bridges form between Cys-31–Cys-43, Cys-42–Cys-313, Cys-62–Cys-148, and Cys-277–Cys-345. His-75 serves as the catalytic Proton acceptor. 4 residues coordinate Ca(2+): Asp-76, Gly-94, Asp-96, and Ser-98. Residue His-204 coordinates heme b. Ca(2+) is bound by residues Ser-205, Asp-222, Thr-224, Ile-227, and Asp-229. Asn-285 is a glycosylation site (N-linked (GlcNAc...) asparagine). The span at 350-361 shows a compositional bias: low complexity; that stretch reads FPTLTTLPGPET. The tract at residues 350–372 is disordered; it reads FPTLTTLPGPETSVQRIPPPPGA.

The protein belongs to the peroxidase family. Ligninase subfamily. The cofactor is heme b. Requires Ca(2+) as cofactor.

It carries out the reaction 1-(3,4-dimethoxyphenyl)-2-(2-methoxyphenoxy)propane-1,3-diol + H2O2 = 3,4-dimethoxybenzaldehyde + guaiacol + glycolaldehyde + H2O. The enzyme catalyses 2 (3,4-dimethoxyphenyl)methanol + H2O2 = 2 (3,4-dimethoxyphenyl)methanol radical + 2 H2O. It functions in the pathway secondary metabolite metabolism; lignin degradation. Functionally, depolymerization of lignin. Catalyzes the C(alpha)-C(beta) cleavage of the propyl side chains of lignin. In Phanerodontia chrysosporium (White-rot fungus), this protein is Ligninase B (LIPB).